A 288-amino-acid chain; its full sequence is Homoserine kinase (288 aa).

79-89 (PPARGLGSSSA) is a binding site for ATP.

It belongs to the GHMP kinase family. Homoserine kinase subfamily.

The protein resides in the cytoplasm. It catalyses the reaction L-homoserine + ATP = O-phospho-L-homoserine + ADP + H(+). It functions in the pathway amino-acid biosynthesis; L-threonine biosynthesis; L-threonine from L-aspartate: step 4/5. Functionally, catalyzes the ATP-dependent phosphorylation of L-homoserine to L-homoserine phosphate. This Listeria monocytogenes serotype 4b (strain CLIP80459) protein is Homoserine kinase.